A 691-amino-acid chain; its full sequence is MMAENNLKMLKIQQCVVANKLPRNRPYVCNICFKHFETPSKLARHYLIHTGQKPFECDVCHKTFRQLVHLERHQLTHSLPFKCSICQRHFKNLKTFVKHQQLHNETYQNNVKQVRRLLEAKQEKSMYGVYNTFTTEERWALHPCSKSDPMYSMKRRKNIHACTICGKMFPSQSKLDRHVLIHTGQRPFKCVLCTKSFRQSTHLKIHQLTHSEERPFQCCFCQKGFKIQSKLLKHKQIHTRNKAFRALLLKKRRTESRPLPNKLNANQGGFENGEIGESEENNPLDVHSIYIVPFQCPKCEKCFESEQILNEHSCFAARSGKIPSRFKRSYNYKTIVKKILAKLKRARSKKLDNFQSEKKVFKKSFLRNCDLISGEQSSEQTQRTFVGSLGKHGTYKTIGNRKKKTLTLPFSWQNMGKNLKGILTTENILSIDNSVNKKDLSICGSSGEEFFNNCEVLQCGFSVPRENIRTRHKICPCDKCEKVFPSISKLKRHYLIHTGQRPFGCNICGKSFRQSAHLKRHEQTHNEKSPYASLCQVEFGNFNNLSNHSGNNVNYNASQQCQAPGVQKYEVSESDQMSGVKAESQDFIPGSTGQPCLPNVLLESEQSNPFCSYSEHQEKNDVFLYRCSVCAKSFRSPSKLERHYLIHAGQKPFECSVCGKTFRQAPHWKRHQLTHFKERPQGKVVALDSVM.

Residue lysine 11 forms a Glycyl lysine isopeptide (Lys-Gly) (interchain with G-Cter in SUMO2) linkage. C2H2-type zinc fingers lie at residues 27–49 (YVCNICFKHFETPSKLARHYLIH), 55–77 (FECDVCHKTFRQLVHLERHQLTH), and 81–103 (FKCSICQRHFKNLKTFVKHQQLH). Residues lysine 112, lysine 121, and lysine 146 each participate in a glycyl lysine isopeptide (Lys-Gly) (interchain with G-Cter in SUMO2) cross-link. 3 consecutive C2H2-type zinc fingers follow at residues 160-182 (HACTICGKMFPSQSKLDRHVLIH), 188-210 (FKCVLCTKSFRQSTHLKIHQLTH), and 216-238 (FQCCFCQKGFKIQSKLLKHKQIH). Residues 258–277 (PLPNKLNANQGGFENGEIGE) form a disordered region. Lysine 262 participates in a covalent cross-link: Glycyl lysine isopeptide (Lys-Gly) (interchain with G-Cter in SUMO2). The C2H2-type 7; degenerate zinc finger occupies 294-318 (FQCPKCEKCFESEQILNEHSCFAAR). Glycyl lysine isopeptide (Lys-Gly) (interchain with G-Cter in SUMO2) cross-links involve residues lysine 420 and lysine 437. 4 consecutive C2H2-type zinc fingers follow at residues 475–497 (CPCDKCEKVFPSISKLKRHYLIH), 503–525 (FGCNICGKSFRQSAHLKRHEQTH), 625–647 (YRCSVCAKSFRSPSKLERHYLIH), and 653–675 (FECSVCGKTFRQAPHWKRHQLTH). Residue lysine 683 forms a Glycyl lysine isopeptide (Lys-Gly) (interchain with G-Cter in SUMO2) linkage.

Belongs to the krueppel C2H2-type zinc-finger protein family.

The protein localises to the nucleus. Its function is as follows. May be involved in transcriptional regulation. The polypeptide is Zinc finger protein 770 (ZNF770) (Homo sapiens (Human)).